Here is a 157-residue protein sequence, read N- to C-terminus: Small ribosomal subunit protein uS7 (157 aa).

It belongs to the universal ribosomal protein uS7 family. In terms of assembly, part of the 30S ribosomal subunit. Contacts proteins S9 and S11.

One of the primary rRNA binding proteins, it binds directly to 16S rRNA where it nucleates assembly of the head domain of the 30S subunit. Is located at the subunit interface close to the decoding center, probably blocks exit of the E-site tRNA. The sequence is that of Small ribosomal subunit protein uS7 from Psychrobacter sp. (strain PRwf-1).